Reading from the N-terminus, the 99-residue chain is Small ribosomal subunit protein eS24 (99 aa).

It belongs to the eukaryotic ribosomal protein eS24 family. As to quaternary structure, may be present in 2 copies per 70S ribosome. Part of the 30S ribosomal subunit, where it binds 16S rRNA at its canonical site at the bse of the body, as well as a possible second 50S binding site near 23S rRNA helix 45.

The sequence is that of Small ribosomal subunit protein eS24 from Pyrococcus furiosus (strain ATCC 43587 / DSM 3638 / JCM 8422 / Vc1).